The following is a 1208-amino-acid chain: Spindle pole body protein pcp1 (1208 aa).

Over residues 1–17 the composition is skewed to basic and acidic residues; sequence MSERDFNTQSPKFKDEN. The disordered stretch occupies residues 1–91; sequence MSERDFNTQS…DKYNGSLGDK (91 aa). Positions 48-64 are enriched in polar residues; that stretch reads NDKSSFQTPLRNGSYQP. Coiled-coil stretches lie at residues 151–375, 387–803, 874–1091, and 1177–1204; these read LREQ…KENQ, TDSM…ANIE, GTET…QSTQ, and ERMK…AKAK. Phosphoserine is present on Ser906.

As to quaternary structure, interacts with ccq1.

The protein resides in the nucleus. It localises to the cytoplasm. The protein localises to the cytoskeleton. It is found in the microtubule organizing center. Its subcellular location is the spindle pole body. In terms of biological role, spindle pole body component that binds calmodulin. Overexpression of pcp1 causes the formation of supernumerary SPB-like structures and disrupts both mitotic spindle assembly and chromosome segregation. This chain is Spindle pole body protein pcp1 (pcp1), found in Schizosaccharomyces pombe (strain 972 / ATCC 24843) (Fission yeast).